Consider the following 38-residue polypeptide: Photosystem II reaction center protein L (38 aa).

The chain crosses the membrane as a helical span at residues S17–F37.

It belongs to the PsbL family. In terms of assembly, PSII is composed of 1 copy each of membrane proteins PsbA, PsbB, PsbC, PsbD, PsbE, PsbF, PsbH, PsbI, PsbJ, PsbK, PsbL, PsbM, PsbT, PsbX, PsbY, PsbZ, Psb30/Ycf12, at least 3 peripheral proteins of the oxygen-evolving complex and a large number of cofactors. It forms dimeric complexes.

The protein localises to the plastid. Its subcellular location is the chloroplast thylakoid membrane. One of the components of the core complex of photosystem II (PSII). PSII is a light-driven water:plastoquinone oxidoreductase that uses light energy to abstract electrons from H(2)O, generating O(2) and a proton gradient subsequently used for ATP formation. It consists of a core antenna complex that captures photons, and an electron transfer chain that converts photonic excitation into a charge separation. This subunit is found at the monomer-monomer interface and is required for correct PSII assembly and/or dimerization. This Adiantum capillus-veneris (Maidenhair fern) protein is Photosystem II reaction center protein L.